Here is a 297-residue protein sequence, read N- to C-terminus: D-alanine--D-alanine ligase (297 aa).

Residues 95 to 294 (KMLWKAFGLP…FEQLVVKILE (200 aa)) form the ATP-grasp domain. Residue 125–180 (VAKLGLPLMVKPSLEGSSVGLTKVKAVEELKSAVEYALKFDNTILIEEWLAGDELT) coordinates ATP. Asp248, Glu261, and Asn263 together coordinate Mg(2+).

It belongs to the D-alanine--D-alanine ligase family. The cofactor is Mg(2+). Mn(2+) serves as cofactor.

It localises to the cytoplasm. It carries out the reaction 2 D-alanine + ATP = D-alanyl-D-alanine + ADP + phosphate + H(+). Its pathway is cell wall biogenesis; peptidoglycan biosynthesis. Its function is as follows. Cell wall formation. This Haemophilus influenzae (strain PittEE) protein is D-alanine--D-alanine ligase.